We begin with the raw amino-acid sequence, 180 residues long: Small ribosomal subunit protein uS4 (180 aa).

The S4 RNA-binding domain maps to 103–174; that stretch reads RRLQTIVYKK…HPERMMIEKA (72 aa).

This sequence belongs to the universal ribosomal protein uS4 family. In terms of assembly, part of the 30S ribosomal subunit. Contacts protein S5. The interaction surface between S4 and S5 is involved in control of translational fidelity.

Functionally, one of the primary rRNA binding proteins, it binds directly to 16S rRNA where it nucleates assembly of the body of the 30S subunit. Its function is as follows. With S5 and S12 plays an important role in translational accuracy. This Pyrococcus abyssi (strain GE5 / Orsay) protein is Small ribosomal subunit protein uS4.